We begin with the raw amino-acid sequence, 153 residues long: ORM1-like protein 3 (153 aa).

Residues M1 to G21 are Cytoplasmic-facing. The next 2 membrane-spanning stretches (helical) occupy residues I22–F42 and V43–F63. At L64 to Q94 the chain is on the cytoplasmic side. A helical membrane pass occupies residues F95–T117. Residues K118–R121 lie on the Extracellular side of the membrane. Residues V122–F142 traverse the membrane as a helical segment. P137 carries the post-translational modification Hydroxyproline. The Cytoplasmic portion of the chain corresponds to H143–Y153.

Belongs to the ORM family. Ceramide-sensitive subunit of the serine palmitoyltransferase (SPT) complex, which is also composed of SPTLC1, SPTLC2/3 and SPTSSA/B. When hydroxylated at Pro-137, ubiquitinated via 'Lys-48'-linkage, leading to proteasomal degradation. In endothelial cells, ORMDL3 proteasomal degradation is controlled by the sphingosine 1-phosphate receptor signaling pathway.

It localises to the endoplasmic reticulum membrane. Its function is as follows. Plays an essential role in the homeostatic regulation of sphingolipid de novo biosynthesis by modulating the activity of the serine palmitoyltransferase (SPT) in response to ceramide levels. When complexed to SPT, the binding of ceramides to its N-terminus stabilizes a conformation that block SPT substrate entry, hence preventing SPT catalytic activity. Through this mechanism, maintains ceramide levels at sufficient concentrations for the production of complex sphingolipids, but which prevents the accumulation of ceramides to levels that trigger apoptosis. The chain is ORM1-like protein 3 (ormdl3) from Danio rerio (Zebrafish).